Consider the following 244-residue polypeptide: Lymphotoxin-beta (244 aa).

The Cytoplasmic segment spans residues Met1–Ser18. The helical; Signal-anchor for type II membrane protein transmembrane segment at Leu19–Pro48 threads the bilayer. Residues Gln49–Gly244 lie on the Extracellular side of the membrane. The THD domain occupies Pro88 to Val243. Asn222 carries an N-linked (GlcNAc...) asparagine glycan.

Belongs to the tumor necrosis factor family. Heterotrimer of either two LTB and one LTA subunits or (less prevalent) one LTB and two LTA subunits. Spleen and thymus.

It is found in the membrane. Its function is as follows. Cytokine that binds to LTBR/TNFRSF3. May play a specific role in immune response regulation. Provides the membrane anchor for the attachment of the heterotrimeric complex to the cell surface. Isoform 2 is probably non-functional. The protein is Lymphotoxin-beta (LTB) of Homo sapiens (Human).